The chain runs to 312 residues: Ribosomal protein L11 methyltransferase (312 aa).

4 residues coordinate S-adenosyl-L-methionine: T162, G183, D205, and N248.

It belongs to the methyltransferase superfamily. PrmA family.

The protein localises to the cytoplasm. The catalysed reaction is L-lysyl-[protein] + 3 S-adenosyl-L-methionine = N(6),N(6),N(6)-trimethyl-L-lysyl-[protein] + 3 S-adenosyl-L-homocysteine + 3 H(+). Its function is as follows. Methylates ribosomal protein L11. In Bacillus cereus (strain B4264), this protein is Ribosomal protein L11 methyltransferase.